Reading from the N-terminus, the 267-residue chain is Neural/ectodermal development factor IMP-L2 (267 aa).

The signal sequence occupies residues 1-25; it reads MEAKMNLHVCALALLLFGSIATVRG. Ig-like C2-type domains follow at residues 48 to 149 and 174 to 260; these read PRNR…KTIY and PRII…TFVY. 2 disulfides stabilise this stretch: cysteine 80–cysteine 139 and cysteine 195–cysteine 244.

As to expression, detected in several sites including the ventral neuroectoderm, the tracheal pits, the pharynx and esophagus, and specific neuronal cell bodies, where it is primarily expressed.

The protein resides in the secreted. The protein localises to the extracellular space. Essential developmental role during embryogenesis, in particular the normal development of the nervous system. May be involved in some aspect of cell adhesion. The protein is Neural/ectodermal development factor IMP-L2 (ImpL2) of Drosophila melanogaster (Fruit fly).